The primary structure comprises 806 residues: Mitogen-activated protein kinase 7 (806 aa).

The tract at residues 1–23 is disordered; it reads MAEPLKEEDGEDGSGEPPGRVKA. Position 2 is an N-acetylalanine (A2). The interval 2–77 is required for cytoplasmic targeting; that stretch reads AEPLKEEDGE…VVSSARRRLT (76 aa). The Protein kinase domain occupies 55–347; sequence YEIIETIGNG…AAAALRHPFL (293 aa). ATP-binding positions include 61 to 69 and K84; that span reads IGNGAYGVV. Positions 78–139 are required for binding to MAP2K5; the sequence is GQQVAIKKIP…FRSVYVVLDL (62 aa). The tract at residues 140 to 406 is necessary for oligomerization; sequence MESDLHQIIH…QQIRFQPSLQ (267 aa). Residue D182 is the Proton acceptor of the active site. A TXY motif is present at residues 219-221; sequence TEY. The segment at 407 to 806 is may not be required for kinase activity; required to stimulate MEF2C activity; sequence PVASEPVCPD…LSDLPDLQEP (400 aa). Disordered regions lie at residues 424–475 and 488–727; these read APSG…SDNT and RSRL…PKGS. A compositionally biased stretch (pro residues) spans 433–443; it reads SPPPALPPCSG. Basic and acidic residues-rich tracts occupy residues 502 to 519, 527 to 544, and 563 to 573; these read PEPR…EREE, RAKE…KERG, and DNDRSLLERWT. The Nuclear localization signal motif lies at 505–539; the sequence is RKPVTAQERQREREEKRRRRQERAKEREKRRQERE. 2 stretches are compositionally biased toward pro residues: residues 578–592 and 627–643; these read PPVP…PTPK and VCPP…PVPA. The span at 647–660 shows a compositional bias: polar residues; sequence TAPSTSLLASQSLV. Residues 678–689 are compositionally biased toward pro residues; sequence PSGPPPPDPGLT. Over residues 693–710 the composition is skewed to polar residues; sequence STSESPDVNLVTQQLSKS. At S710 the chain carries Phosphoserine. Phosphothreonine is present on T723.

It belongs to the protein kinase superfamily. CMGC Ser/Thr protein kinase family. MAP kinase subfamily. Interacts with MAP2K5. Forms oligomers. Interacts with MEF2A, MEF2C and MEF2D; the interaction phosphorylates the MEF2s and enhances transcriptional activity of MEF2A, MEF2C but not MEF2D. Interacts with SGK1. Interacts with PML. Interacts (via N-terminal half) with HSP90AB1-CDC37 chaperone complex in resting cells; the interaction is MAP2K5-independent and prevents MAPK7 from ubiquitination and proteasomal degradation. Interacts with STUB1/CHIP; the interaction is enhanced in the presence of IGF1 or MAP2K5 and promotes STUB1/CHIP E3 ligase activity. The cofactor is Mg(2+). Post-translationally, dually phosphorylated on Thr-219 and Tyr-221, which activates the enzyme.

It localises to the cytoplasm. The protein resides in the nucleus. The protein localises to the PML body. It catalyses the reaction L-seryl-[protein] + ATP = O-phospho-L-seryl-[protein] + ADP + H(+). The enzyme catalyses L-threonyl-[protein] + ATP = O-phospho-L-threonyl-[protein] + ADP + H(+). With respect to regulation, activated by tyrosine and threonine phosphorylation. Activated in response to hyperosmolarity, hydrogen peroxide, and epidermal growth factor (EGF). Functionally, plays a role in various cellular processes such as proliferation, differentiation and cell survival. The upstream activator of MAPK7 is the MAPK kinase MAP2K5. Upon activation, it translocates to the nucleus and phosphorylates various downstream targets including MEF2C. EGF activates MAPK7 through a Ras-independent and MAP2K5-dependent pathway. As part of the MAPK/ERK signaling pathway, acts as a negative regulator of apoptosis in cardiomyocytes via interaction with STUB1/CHIP and promotion of STUB1-mediated ubiquitination and degradation of ICER-type isoforms of CREM. May have a role in muscle cell differentiation. May be important for endothelial function and maintenance of blood vessel integrity. MAP2K5 and MAPK7 interact specifically with one another and not with MEK1/ERK1 or MEK2/ERK2 pathways. Phosphorylates SGK1 at Ser-78 and this is required for growth factor-induced cell cycle progression. Involved in the regulation of p53/TP53 by disrupting the PML-MDM2 interaction. This Rattus norvegicus (Rat) protein is Mitogen-activated protein kinase 7 (Mapk7).